We begin with the raw amino-acid sequence, 410 residues long: Lissencephaly-1 homolog (410 aa).

A LisH domain is found at 7–39; the sequence is QRDELNRAIADYLRSNGYEEAYSVFKKEAELDM. Residues 56-82 adopt a coiled-coil conformation; sequence TSVIRLQKKVMELESKLNEAKEEFTSG. 7 WD repeats span residues 106–147, 148–187, 190–229, 232–271, 274–333, 336–377, and 379–410; these read GHRS…RTLK, GHTD…CIRT, GHDH…CVKT, GHRE…CKAE, EHEH…CLMT, GHDN…KTLN, and HEHF…WECR.

It belongs to the WD repeat LIS1/nudF family. As to quaternary structure, can self-associate. Component of the cytosolic PAF-AH (I) heterotetrameric enzyme, which is composed of PAFAH1B1 (beta), PAFAH1B2 (alpha2) and PAFAH1B3 (alpha1) subunits. The catalytic activity of the enzyme resides in the alpha1 (PAFAH1B3) and alpha2 (PAFAH1B2) subunits, whereas the beta subunit (PAFAH1B1) has regulatory activity. Trimer formation is not essential for the catalytic activity. Interacts with dynein, dynactin, nde1 and ndel1.

It localises to the cytoplasm. It is found in the cytoskeleton. The protein localises to the microtubule organizing center. The protein resides in the centrosome. Regulatory subunit (beta subunit) of the cytosolic type I platelet-activating factor (PAF) acetylhydrolase (PAF-AH (I)), an enzyme that catalyzes the hydrolyze of the acetyl group at the sn-2 position of PAF and its analogs and participates in the PAF inactivation. Positively regulates the activity of the minus-end directed microtubule motor protein dynein. May enhance dynein-mediated microtubule sliding by targeting dynein to the microtubule plus end. Required for several dynein- and microtubule-dependent processes such as the maintenance of Golgi integrity, the peripheral transport of microtubule fragments and the coupling of the nucleus and centrosome. May be required for proliferation of neuronal precursors and neuronal migration. The polypeptide is Lissencephaly-1 homolog (pafah1b1) (Xenopus tropicalis (Western clawed frog)).